We begin with the raw amino-acid sequence, 396 residues long: Elongation factor Tu (396 aa).

Residues 10–205 enclose the tr-type G domain; sequence KPHVNIGTIG…ACDDSIPDPE (196 aa). The segment at 19–26 is G1; sequence GHVDHGKT. 19–26 is a binding site for GTP; sequence GHVDHGKT. Residue Thr-26 coordinates Mg(2+). The G2 stretch occupies residues 62–66; it reads GITIN. The segment at 83-86 is G3; that stretch reads DAPG. GTP-binding positions include 83-87 and 138-141; these read DAPGH and NKCD. The interval 138–141 is G4; it reads NKCD. Positions 175 to 177 are G5; the sequence is SAL.

Belongs to the TRAFAC class translation factor GTPase superfamily. Classic translation factor GTPase family. EF-Tu/EF-1A subfamily. Monomer.

Its subcellular location is the cytoplasm. The enzyme catalyses GTP + H2O = GDP + phosphate + H(+). In terms of biological role, GTP hydrolase that promotes the GTP-dependent binding of aminoacyl-tRNA to the A-site of ribosomes during protein biosynthesis. The sequence is that of Elongation factor Tu from Corynebacterium aurimucosum (strain ATCC 700975 / DSM 44827 / CIP 107346 / CN-1) (Corynebacterium nigricans).